Consider the following 579-residue polypeptide: Glucans biosynthesis protein G (579 aa).

The N-terminal stretch at 1–37 (MIVSPHKASRIPGNRLRKALMASAALVGLMSAGQLWA) is a signal peptide. The tract at residues 516-579 (AKPAEEAKHD…TWSYQLPADE (64 aa)) is disordered. The span at 517–539 (KPAEEAKHDKTAAKHGKAEKAAK) shows a compositional bias: basic and acidic residues.

The protein belongs to the OpgD/OpgG family.

It is found in the periplasm. It participates in glycan metabolism; osmoregulated periplasmic glucan (OPG) biosynthesis. Functionally, involved in the biosynthesis of osmoregulated periplasmic glucans (OPGs). This is Glucans biosynthesis protein G from Pseudomonas putida (strain W619).